Consider the following 384-residue polypeptide: N-acetyldiaminopimelate deacetylase (384 aa).

D75 is a catalytic residue. E134 functions as the Proton acceptor in the catalytic mechanism.

It belongs to the peptidase M20A family. N-acetyldiaminopimelate deacetylase subfamily.

It carries out the reaction N-acetyl-(2S,6S)-2,6-diaminopimelate + H2O = (2S,6S)-2,6-diaminopimelate + acetate. Its pathway is amino-acid biosynthesis; L-lysine biosynthesis via DAP pathway; LL-2,6-diaminopimelate from (S)-tetrahydrodipicolinate (acetylase route): step 3/3. Functionally, catalyzes the conversion of N-acetyl-diaminopimelate to diaminopimelate and acetate. This is N-acetyldiaminopimelate deacetylase from Lactobacillus helveticus (strain DPC 4571).